Consider the following 175-residue polypeptide: MKTMFILALLAFTATSAVAQLYTTCSQGYGQCQQQPQPQPQMNTCSAFLQQCIQTPYVQSQMWQASSCQLMRQQCCQPLAQISEQARCQAVCSVSQIIMRQQQGQRFGQPQQQQGQSFSQPQQQVPVEIMRMVLQTLPSMCSVNIPQYCTTTPCSTITPAIYSIPMTATCAGGAC.

A signal peptide spans 1-19; sequence MKTMFILALLAFTATSAVA.

It belongs to the prolamin family. Contains 7 disulfide bonds.

Seed storage protein. Not integrated in the gluten polymer through disulfide bonds, unless incorporated by reduction and reoxidation during dough making. Increases dough strength and bread volume, but decreases dough stability when added into a base wheat flour. In Triticum aestivum (Wheat), this protein is Avenin-like a7.